Consider the following 391-residue polypeptide: Glycerol-3-phosphate dehydrogenase [NAD(+)] (391 aa).

NAD(+) contacts are provided by residues 46 to 51 (GSGNWG), Phe-78, and Phe-134. Position 157 (Lys-157) interacts with substrate. Residue Ala-190 participates in NAD(+) binding. Lys-250 functions as the Proton acceptor in the catalytic mechanism. NAD(+) contacts are provided by Arg-315 and Gln-344. A substrate-binding site is contributed by 315-316 (RN).

The protein belongs to the NAD-dependent glycerol-3-phosphate dehydrogenase family.

It carries out the reaction sn-glycerol 3-phosphate + NAD(+) = dihydroxyacetone phosphate + NADH + H(+). The polypeptide is Glycerol-3-phosphate dehydrogenase [NAD(+)] (GPD) (Candida tropicalis (Yeast)).